The sequence spans 78 residues: Omega-conotoxin PnVIA (78 aa).

The N-terminal stretch at methionine 1 to alanine 22 is a signal peptide. Positions aspartate 23–arginine 45 are excised as a propeptide. 3 cysteine pairs are disulfide-bonded: cysteine 47/cysteine 65, cysteine 54/cysteine 69, and cysteine 64/cysteine 73. Residue glutamine 76 is modified to Glutamine amide.

In terms of tissue distribution, expressed by the venom duct.

The protein resides in the secreted. Functionally, omega-conotoxins act at presynaptic membranes, they bind and block voltage-gated calcium channels (Cav). Acts on high voltage-activated (HVA) calcium currents in molluscan neurons. The chain is Omega-conotoxin PnVIA from Conus pennaceus (Feathered cone).